A 504-amino-acid chain; its full sequence is 26S proteasome non-ATPase regulatory subunit 3 (504 aa).

The region spanning 254–433 is the PCI domain; that stretch reads ARYMYYQGRI…RDGPRYMQSS (180 aa).

Belongs to the proteasome subunit S3 family. As to quaternary structure, the 26S proteasome is composed of a core protease, known as the 20S proteasome, capped at one or both ends by the 19S regulatory complex (RC). The RC is composed of at least 18 different subunits in two subcomplexes, the base and the lid, which form the portions proximal and distal to the 20S proteolytic core, respectively.

Acts as a regulatory subunit of the 26 proteasome which is involved in the ATP-dependent degradation of ubiquitinated proteins. This chain is 26S proteasome non-ATPase regulatory subunit 3 (rpn-3), found in Caenorhabditis elegans.